The chain runs to 234 residues: Golgi SNAP receptor complex member 1 (234 aa).

Over 1–212 (MSETWEALRK…MQKIKTKKQK (212 aa)) the chain is Cytoplasmic. A coiled-coil region spans residues 54 to 121 (VTTEIEGLIE…RDNVDQVLQR (68 aa)). The helical; Anchor for type IV membrane protein transmembrane segment at 213–233 (NTMILAGVISACLIFTIFWII) threads the bilayer. Residue N234 is a topological domain, vesicular.

Belongs to the GOSR1 family. As to quaternary structure, component of several multiprotein Golgi SNARE complexes.

It localises to the golgi apparatus membrane. Involved in transport from the ER to the Golgi apparatus as well as in intra-Golgi transport. It belongs to a super-family of proteins called t-SNAREs or soluble NSF (N-ethylmaleimide-sensitive factor) attachment protein receptor. Cooperates with ykt-6 for proper expression of Golgi-resident proteins. Required along with ykt-6 for normal embryonic development, seam cell division or differentiation, and ray formation. The polypeptide is Golgi SNAP receptor complex member 1 (Caenorhabditis briggsae).